The following is a 285-amino-acid chain: tRNA pseudouridine synthase B (285 aa).

Asp-40 serves as the catalytic Nucleophile.

Belongs to the pseudouridine synthase TruB family. Type 1 subfamily.

It catalyses the reaction uridine(55) in tRNA = pseudouridine(55) in tRNA. Functionally, responsible for synthesis of pseudouridine from uracil-55 in the psi GC loop of transfer RNAs. The sequence is that of tRNA pseudouridine synthase B from Caldanaerobacter subterraneus subsp. tengcongensis (strain DSM 15242 / JCM 11007 / NBRC 100824 / MB4) (Thermoanaerobacter tengcongensis).